The chain runs to 190 residues: U1 small nuclear ribonucleoprotein C-1 (190 aa).

The segment at 4–36 (YYCDYCDVFLVSESPSVRKAHNSGRNHLTNVRD) adopts a Matrin-type zinc-finger fold. Positions 57-190 (FETGGGNSTS…PDRARQLGLI (134 aa)) are disordered. Over residues 72–82 (GNPPGSQPGPP) the composition is skewed to pro residues. Residues 109–124 (AMLALMNGQNGMSSPG) are compositionally biased toward low complexity. A compositionally biased stretch (pro residues) spans 125-141 (SGPPPMRFAGPPIPNNM). Over residues 180–190 (NPDRARQLGLI) the composition is skewed to basic and acidic residues.

It belongs to the U1 small nuclear ribonucleoprotein C family. In terms of assembly, U1 snRNP is composed of the 7 core Sm proteins B/B', D1, D2, D3, E, F and G that assemble in a heptameric protein ring on the Sm site of the small nuclear RNA to form the core snRNP, and at least 3 U1 snRNP-specific proteins U1-70K, U1-A and U1-C. U1-C interacts with U1 snRNA and the 5' splice-site region of the pre-mRNA.

It is found in the nucleus. Functionally, component of the spliceosomal U1 snRNP, which is essential for recognition of the pre-mRNA 5' splice-site and the subsequent assembly of the spliceosome. U1-C is directly involved in initial 5' splice-site recognition for both constitutive and regulated alternative splicing. The interaction with the 5' splice-site seems to precede base-pairing between the pre-mRNA and the U1 snRNA. Stimulates commitment or early (E) complex formation by stabilizing the base pairing of the 5' end of the U1 snRNA and the 5' splice-site region. In Puccinia graminis f. sp. tritici (strain CRL 75-36-700-3 / race SCCL) (Black stem rust fungus), this protein is U1 small nuclear ribonucleoprotein C-1.